Here is a 373-residue protein sequence, read N- to C-terminus: Histidinol-phosphate aminotransferase (373 aa).

N6-(pyridoxal phosphate)lysine is present on Lys-233.

This sequence belongs to the class-II pyridoxal-phosphate-dependent aminotransferase family. Histidinol-phosphate aminotransferase subfamily. As to quaternary structure, homodimer. Pyridoxal 5'-phosphate is required as a cofactor.

The catalysed reaction is L-histidinol phosphate + 2-oxoglutarate = 3-(imidazol-4-yl)-2-oxopropyl phosphate + L-glutamate. Its pathway is amino-acid biosynthesis; L-histidine biosynthesis; L-histidine from 5-phospho-alpha-D-ribose 1-diphosphate: step 7/9. In Nitratidesulfovibrio vulgaris (strain ATCC 29579 / DSM 644 / CCUG 34227 / NCIMB 8303 / VKM B-1760 / Hildenborough) (Desulfovibrio vulgaris), this protein is Histidinol-phosphate aminotransferase.